The sequence spans 431 residues: CCA-adding enzyme (431 aa).

Positions 50 and 53 each coordinate ATP. Ser50 and Lys53 together coordinate CTP. Mg(2+)-binding residues include Asp61, Asp63, and Asp112. Positions 135, 155, and 164 each coordinate ATP. CTP contacts are provided by His135, Lys155, and Tyr164.

Belongs to the tRNA nucleotidyltransferase/poly(A) polymerase family. Archaeal CCA-adding enzyme subfamily. In terms of assembly, homodimer. Requires Mg(2+) as cofactor.

The catalysed reaction is a tRNA precursor + 2 CTP + ATP = a tRNA with a 3' CCA end + 3 diphosphate. It catalyses the reaction a tRNA with a 3' CCA end + 2 CTP + ATP = a tRNA with a 3' CCACCA end + 3 diphosphate. Its function is as follows. Catalyzes the addition and repair of the essential 3'-terminal CCA sequence in tRNAs without using a nucleic acid template. Adds these three nucleotides in the order of C, C, and A to the tRNA nucleotide-73, using CTP and ATP as substrates and producing inorganic pyrophosphate. tRNA 3'-terminal CCA addition is required both for tRNA processing and repair. Also involved in tRNA surveillance by mediating tandem CCA addition to generate a CCACCA at the 3' terminus of unstable tRNAs. While stable tRNAs receive only 3'-terminal CCA, unstable tRNAs are marked with CCACCA and rapidly degraded. This is CCA-adding enzyme from Thermoplasma acidophilum (strain ATCC 25905 / DSM 1728 / JCM 9062 / NBRC 15155 / AMRC-C165).